The following is a 634-amino-acid chain: Sodium-dependent neutral amino acid transporter B(0)AT1 (634 aa).

At 1–41 the chain is on the cytoplasmic side; it reads MVRLVLPNPGLDARIPSLAELETIEQEEASSRPKWDNKAQY. A Phosphoserine modification is found at Ser17. A helical transmembrane segment spans residues 42–62; it reads MLTCLGFCVGLGNVWRFPYLC. Over 63 to 67 the chain is Extracellular; the sequence is QSHGG. Residues 68–88 form a helical membrane-spanning segment; it reads GAFMIPFLILLVLEGIPLLYL. Over 89 to 120 the chain is Cytoplasmic; it reads EFAIGQRLRRGSLGVWSSIHPALKGLGLASML. Residues 121-141 form a helical membrane-spanning segment; sequence TSFMVGLYYNTIISWIMWYLF. The Extracellular segment spans residues 142 to 192; it reads NSFQEPLPWSDCPLNENQTGYVDECARSSPVDYFWYRETLNISTSISDSGS. N-linked (GlcNAc...) asparagine glycosylation is found at Asn158 and Asn182. Residues 193-213 form a helical membrane-spanning segment; the sequence is IQWWMLLCLACAWSVLYMCTI. Residues 214-221 are Cytoplasmic-facing; it reads RGIETTGK. The helical transmembrane segment at 222–242 threads the bilayer; sequence AVYITSTLPYVVLTIFLIRGL. At 243–268 the chain is on the extracellular side; it reads TLKGATNGIVFLFTPNVTELAQPDTW. An N-linked (GlcNAc...) asparagine glycan is attached at Asn258. Residues 269 to 289 form a helical membrane-spanning segment; it reads LDAGAQVFFSFSLAFGGLISF. Residues 290–304 lie on the Cytoplasmic side of the membrane; the sequence is SSYNSVHNNCEKDSV. A helical membrane pass occupies residues 305–325; sequence IVSIINGFTSVYVAIVVYSVI. Topologically, residues 326-413 are extracellular; that stretch reads GFRATQRYDD…TEAITKMPLS (88 aa). Residues Asn354 and Asn368 are each glycosylated (N-linked (GlcNAc...) asparagine). The helical transmembrane segment at 414–434 threads the bilayer; it reads PLWSVLFFIMLFCLGLSSMFG. Residues 435–456 are Cytoplasmic-facing; that stretch reads NMEGVVVPLQDLRVIPPKWPKE. Residues 457–477 traverse the membrane as a helical segment; it reads VLTGLICLGTFLIGFIFTLNS. Residues 478-490 lie on the Extracellular side of the membrane; the sequence is GQYWLSLLDSYAG. A helical membrane pass occupies residues 491 to 511; that stretch reads SIPLLIIAFCEMFSVVYVYGV. Residues 512–531 lie on the Cytoplasmic side of the membrane; sequence DRFNKDIEFMIGHKPNIFWQ. A helical membrane pass occupies residues 532–552; sequence VTWRVVSPLLMLIIFLFFFVV. Residues 553-581 are Extracellular-facing; that stretch reads EVSQELTYSIWDPGYEEFPKSQKISYPNW. Residues 582–602 form a helical membrane-spanning segment; that stretch reads VYVVVVIVAGVPSLTIPGYAI. Over 603–634 the chain is Cytoplasmic; that stretch reads YKLIRNHCQKPGDHQGLVSTLSTASMNGDLKY. At Ser627 the chain carries Phosphoserine.

This sequence belongs to the sodium:neurotransmitter symporter (SNF) (TC 2.A.22) family. SLC6A19 subfamily. As to quaternary structure, interacts in a tissue-specific manner with ACE2 in small intestine and with CLTRN in the kidney. Interacts with CLTRN; this interaction is required for trafficking of SLC6A19 to the plasma membrane and for its catalytic activation in kidneys. Interacts with ACE2; this interaction is required for trafficking of SLC6A19 to the plasma membrane and for its catalytic activation in intestine. Interacts with ANPEP; the interaction positively regulates its amino acid transporter activity. Robust expression in kidney and small intestine, with minimal expression in pancreas. Also expressed in stomach, liver, duodenum, ileocecum, colon and prostate. Not detected in testis, whole brain, cerebellum, fetal liver, spleen, skeletal muscle, uterus, heart or lung.

It localises to the cell membrane. The protein resides in the apical cell membrane. It carries out the reaction L-alanine(in) + Na(+)(in) = L-alanine(out) + Na(+)(out). It catalyses the reaction L-cysteine(in) + Na(+)(in) = L-cysteine(out) + Na(+)(out). The enzyme catalyses L-glutamine(in) + Na(+)(in) = L-glutamine(out) + Na(+)(out). The catalysed reaction is glycine(in) + Na(+)(in) = glycine(out) + Na(+)(out). It carries out the reaction L-isoleucine(in) + Na(+)(in) = L-isoleucine(out) + Na(+)(out). It catalyses the reaction L-leucine(in) + Na(+)(in) = L-leucine(out) + Na(+)(out). The enzyme catalyses L-methionine(in) + Na(+)(in) = L-methionine(out) + Na(+)(out). The catalysed reaction is L-phenylalanine(in) + Na(+)(in) = L-phenylalanine(out) + Na(+)(out). It carries out the reaction L-serine(in) + Na(+)(in) = L-serine(out) + Na(+)(out). It catalyses the reaction L-tryptophan(in) + Na(+)(in) = L-tryptophan(out) + Na(+)(out). The enzyme catalyses L-tyrosine(in) + Na(+)(in) = L-tyrosine(out) + Na(+)(out). The catalysed reaction is L-valine(in) + Na(+)(in) = L-valine(out) + Na(+)(out). Functionally, transporter that mediates resorption of neutral amino acids across the apical membrane of renal and intestinal epithelial cells. This uptake is sodium-dependent and chloride-independent. Requires CLTRN in kidney or ACE2 in intestine for cell surface expression and amino acid transporter activity. The chain is Sodium-dependent neutral amino acid transporter B(0)AT1 (SLC6A19) from Homo sapiens (Human).